We begin with the raw amino-acid sequence, 402 residues long: F-box protein At4g22390 (402 aa).

Positions 1–49 (MAECPTDLINEMFLRLRATTLVKCRVLSKPCFSLIDSPEFVSSHLRRRL) constitute an F-box domain.

The sequence is that of F-box protein At4g22390 from Arabidopsis thaliana (Mouse-ear cress).